The following is an 833-amino-acid chain: Leucine--tRNA ligase (833 aa).

The 'HIGH' region motif lies at 41–52 (PYPSGAGLHVGH). The 'KMSKS' region signature appears at 610 to 614 (KMSKS). K613 lines the ATP pocket.

It belongs to the class-I aminoacyl-tRNA synthetase family.

The protein resides in the cytoplasm. It carries out the reaction tRNA(Leu) + L-leucine + ATP = L-leucyl-tRNA(Leu) + AMP + diphosphate. The chain is Leucine--tRNA ligase from Streptococcus suis (strain 05ZYH33).